The primary structure comprises 617 residues: Serine/threonine-protein kinase par-4 (617 aa).

Polar residues predominate over residues 1–11 (MDAPSTSSGAQ). Residues 1-59 (MDAPSTSSGAQSKLLMPGDDEADEDHQNRGDPNLQQKQKIQLNVDPDYDDDEDDDCFID) are disordered. Over residues 46-57 (PDYDDDEDDDCF) the composition is skewed to acidic residues. Residues 183–446 (YMWGGQIGTG…CLETMIHPWF (264 aa)) form the Protein kinase domain. ATP-binding positions include 189 to 197 (IGTGSYGKV) and Lys212. Catalysis depends on Asp310, which acts as the Proton acceptor. The disordered stretch occupies residues 523-617 (LEAKPGDGPD…CIFRSRTDSA (95 aa)). Pro residues predominate over residues 587–597 (DPPPTAAPGAP).

Belongs to the protein kinase superfamily. CAMK Ser/Thr protein kinase family. LKB1 subfamily. As to quaternary structure, interacts with strd-1. Requires Mg(2+) as cofactor. It depends on Mn(2+) as a cofactor. As to expression, expressed in the gonads, oocytes and early embryos (at protein level).

It localises to the cytoplasm. Its subcellular location is the cell cortex. It catalyses the reaction L-seryl-[protein] + ATP = O-phospho-L-seryl-[protein] + ADP + H(+). The catalysed reaction is L-threonyl-[protein] + ATP = O-phospho-L-threonyl-[protein] + ADP + H(+). Its function is as follows. Required for cytoplasmic partitioning and asymmetric cell division in early embryogenesis. Controls the asymmetric cell division of the Q.p neuroblast lineage. Involved in mediating cell polarization via regulation of anillin family scaffold proteins. Phosphorylates and restricts the asymmetry effectors mex-5 and mex-6 to the anterior cytoplasm of the zygote and maintains these phosphorylations until fertilization. May phosphorylate par-1. Required for strd-1 localization to the cell cortex of early embryos and may be required for strd-1 protein stabilization. May regulate the integrity of the early embryonic cortex in a strd-1-dependent manner. Phosphorylates and regulates aak-2 in response to oxidative stress and during dauer development. May also play a role in motility, behavioral response, regulation of lifespan and dauer formation through this pathway. Required to establish germline stem cell (GSC) quiescence during dauer development. Acts downstream of unc-40 in dendrite outgrowth. May play a role in cell shedding during embryogenesis, probably by phosphorylating pig-1. This Caenorhabditis elegans protein is Serine/threonine-protein kinase par-4 (par-4).